The sequence spans 84 residues: Envelope glycoprotein N (84 aa).

The first 26 residues, 1 to 26 (MSCKKGARQRLYVSLWLFYILVFAAA), serve as a signal peptide directing secretion. At 27 to 45 (TEMDFYSSECHSHTYEIVL) the chain is on the virion surface side. Residues 46 to 66 (NSFSSIWLLINLFLLLCSFAI) form a helical membrane-spanning segment. The Intravirion segment spans residues 67–84 (FLKYWCYKTFASETVKGY).

The protein belongs to the herpesviridae glycoprotein N family. As to quaternary structure, interacts (via N-terminus) with gM (via N-terminus). The gM-gN heterodimer forms the gCII complex.

Its subcellular location is the virion membrane. It is found in the host membrane. The protein localises to the host Golgi apparatus. It localises to the host trans-Golgi network. Functionally, envelope glycoprotein necessary for proper maturation of gM and modulation of its membrane fusion activity. Also plays a critical role in virion morphogenesis. The chain is Envelope glycoprotein N from Human herpesvirus 6B (strain Z29) (HHV-6 variant B).